A 170-amino-acid polypeptide reads, in one-letter code: Putative pre-16S rRNA nuclease (170 aa).

Positions 1-18 (MGTDDRLPDRPGADDPGR) are enriched in basic and acidic residues. The disordered stretch occupies residues 1–22 (MGTDDRLPDRPGADDPGRGRRI).

It belongs to the YqgF nuclease family.

It localises to the cytoplasm. Could be a nuclease involved in processing of the 5'-end of pre-16S rRNA. In Mycolicibacterium smegmatis (strain ATCC 700084 / mc(2)155) (Mycobacterium smegmatis), this protein is Putative pre-16S rRNA nuclease.